The primary structure comprises 172 residues: ATP synthase subunit b (172 aa).

Residues 17–37 (IVFSAIVLAIVLPFFWWFVIP) traverse the membrane as a helical segment.

The protein belongs to the ATPase B chain family. As to quaternary structure, F-type ATPases have 2 components, F(1) - the catalytic core - and F(0) - the membrane proton channel. F(1) has five subunits: alpha(3), beta(3), gamma(1), delta(1), epsilon(1). F(0) has three main subunits: a(1), b(2) and c(10-14). The alpha and beta chains form an alternating ring which encloses part of the gamma chain. F(1) is attached to F(0) by a central stalk formed by the gamma and epsilon chains, while a peripheral stalk is formed by the delta and b chains.

The protein resides in the cell membrane. F(1)F(0) ATP synthase produces ATP from ADP in the presence of a proton or sodium gradient. F-type ATPases consist of two structural domains, F(1) containing the extramembraneous catalytic core and F(0) containing the membrane proton channel, linked together by a central stalk and a peripheral stalk. During catalysis, ATP synthesis in the catalytic domain of F(1) is coupled via a rotary mechanism of the central stalk subunits to proton translocation. In terms of biological role, component of the F(0) channel, it forms part of the peripheral stalk, linking F(1) to F(0). The polypeptide is ATP synthase subunit b (Tropheryma whipplei (strain TW08/27) (Whipple's bacillus)).